Here is a 157-residue protein sequence, read N- to C-terminus: Protein Smg homolog (157 aa).

This sequence belongs to the Smg family.

The chain is Protein Smg homolog from Shewanella pealeana (strain ATCC 700345 / ANG-SQ1).